Here is a 424-residue protein sequence, read N- to C-terminus: UPF0053 protein MG146 homolog (424 aa).

Positions 6-191 (SGGLLALIII…EQNGLFTKED (186 aa)) constitute a CNNM transmembrane domain. 4 consecutive transmembrane segments (helical) span residues 7-27 (GGLL…SAVV), 71-91 (LITI…ILFL), 101-121 (AISS…LCEI), and 135-155 (LVYF…ITKL). 2 CBS domains span residues 210-270 (MIKW…NEPF) and 275-335 (LLYP…EHDE).

This sequence belongs to the UPF0053 family.

The protein localises to the cell membrane. This Mycoplasma pneumoniae (strain ATCC 29342 / M129 / Subtype 1) (Mycoplasmoides pneumoniae) protein is UPF0053 protein MG146 homolog.